The chain runs to 1403 residues: DNA-directed RNA polymerase subunit beta' (1403 aa).

Positions 71, 73, 86, and 89 each coordinate Zn(2+). 3 residues coordinate Mg(2+): Asp-462, Asp-464, and Asp-466. Residues Cys-811, Cys-885, Cys-892, and Cys-895 each contribute to the Zn(2+) site.

It belongs to the RNA polymerase beta' chain family. As to quaternary structure, the RNAP catalytic core consists of 2 alpha, 1 beta, 1 beta' and 1 omega subunit. When a sigma factor is associated with the core the holoenzyme is formed, which can initiate transcription. Mg(2+) serves as cofactor. Zn(2+) is required as a cofactor.

It catalyses the reaction RNA(n) + a ribonucleoside 5'-triphosphate = RNA(n+1) + diphosphate. Its function is as follows. DNA-dependent RNA polymerase catalyzes the transcription of DNA into RNA using the four ribonucleoside triphosphates as substrates. The polypeptide is DNA-directed RNA polymerase subunit beta' (Bartonella bacilliformis (strain ATCC 35685 / KC583 / Herrer 020/F12,63)).